Reading from the N-terminus, the 418-residue chain is Histidine--tRNA ligase (418 aa).

Belongs to the class-II aminoacyl-tRNA synthetase family. In terms of assembly, homodimer.

The protein resides in the cytoplasm. The catalysed reaction is tRNA(His) + L-histidine + ATP = L-histidyl-tRNA(His) + AMP + diphosphate + H(+). The polypeptide is Histidine--tRNA ligase (Thermoanaerobacter sp. (strain X514)).